A 410-amino-acid polypeptide reads, in one-letter code: ORC1-type DNA replication protein 2 (410 aa).

ATP-binding positions include 60–65, Y213, and R225; that span reads GIGKTT.

It belongs to the CDC6/cdc18 family.

In terms of biological role, involved in regulation of DNA replication. Binds DNA. In Aeropyrum pernix (strain ATCC 700893 / DSM 11879 / JCM 9820 / NBRC 100138 / K1), this protein is ORC1-type DNA replication protein 2 (orc2).